The primary structure comprises 389 residues: Alkanesulfonate monooxygenase (389 aa).

It belongs to the SsuD family.

The catalysed reaction is an alkanesulfonate + FMNH2 + O2 = an aldehyde + FMN + sulfite + H2O + 2 H(+). Functionally, catalyzes the desulfonation of aliphatic sulfonates. The polypeptide is Alkanesulfonate monooxygenase (Variovorax paradoxus (strain S110)).